The sequence spans 290 residues: Arylamine N-acetyltransferase 2 (290 aa).

Cys-68 functions as the Acyl-thioester intermediate in the catalytic mechanism. Ser-103 and Gly-104 together coordinate CoA. 106–107 (IH) lines the substrate pocket. Catalysis depends on residues His-107 and Asp-122. Tyr-208 contributes to the CoA binding site.

It belongs to the arylamine N-acetyltransferase family.

It localises to the cytoplasm. The catalysed reaction is an arylamine + acetyl-CoA = an N-acetylarylamine + CoA. The enzyme catalyses an N-hydroxyarylamine + acetyl-CoA = an N-acetoxyarylamine + CoA. Catalyzes the N- or O-acetylation of various arylamine and heterocyclic amine substrates, and participates in the detoxification of a plethora of hydrazine and arylamine drugs. The sequence is that of Arylamine N-acetyltransferase 2 (NAT2) from Mesocricetus auratus (Golden hamster).